A 1026-amino-acid polypeptide reads, in one-letter code: Adenylate-forming reductase 06235 (1026 aa).

The tract at residues 37–422 is adenylation (A) domain; it reads FEFHAKANPD…LGRIDNQVKI (386 aa). AMP contacts are provided by residues 332–333 and 412–415; these read VT and HLGR. The tract at residues 556–638 is thiolation and peptide carrier (T) domain; the sequence is SLVSTVGSTV…ALFIWILVTK (83 aa). The segment at 682-901 is reductase (R) domain; the sequence is CIRRVCARIY…PPTKMWVKGV (220 aa). NADP(+)-binding positions include 685–688, 769–771, and tyrosine 840; these read RVCA and TAL.

Belongs to the adenylate-forming reductase family.

Its function is as follows. Adenylate-forming reductase, a natural product biosynthesis enzyme that resembles non-ribosomal peptide synthetases, yet serves to modify one substrate, rather than to condense two or more building blocks. The A-domain preferentially accepts L-serine, L-alanine and L-valine as substrates. The natural product of the enzyme is not yet known. The polypeptide is Adenylate-forming reductase 06235 (Coprinopsis cinerea (strain Okayama-7 / 130 / ATCC MYA-4618 / FGSC 9003) (Inky cap fungus)).